Consider the following 175-residue polypeptide: Ribosome maturation factor RimM (175 aa).

One can recognise a PRC barrel domain in the interval 98-175; it reads EGEYYWYQLE…EMRVDWDADF (78 aa).

Belongs to the RimM family. Binds ribosomal protein uS19.

It localises to the cytoplasm. In terms of biological role, an accessory protein needed during the final step in the assembly of 30S ribosomal subunit, possibly for assembly of the head region. Essential for efficient processing of 16S rRNA. May be needed both before and after RbfA during the maturation of 16S rRNA. It has affinity for free ribosomal 30S subunits but not for 70S ribosomes. This is Ribosome maturation factor RimM from Pseudomonas paraeruginosa (strain DSM 24068 / PA7) (Pseudomonas aeruginosa (strain PA7)).